The sequence spans 198 residues: Glycerol-3-phosphate acyltransferase (198 aa).

5 helical membrane passes run 10-30, 57-77, 86-106, 118-138, and 160-180; these read LIPI…WILV, GISF…ILIL, IMYL…WFLF, VVLS…AVVF, and AVTE…IVLI.

This sequence belongs to the PlsY family. Probably interacts with PlsX.

The protein resides in the cell inner membrane. It carries out the reaction an acyl phosphate + sn-glycerol 3-phosphate = a 1-acyl-sn-glycero-3-phosphate + phosphate. It participates in lipid metabolism; phospholipid metabolism. In terms of biological role, catalyzes the transfer of an acyl group from acyl-phosphate (acyl-PO(4)) to glycerol-3-phosphate (G3P) to form lysophosphatidic acid (LPA). This enzyme utilizes acyl-phosphate as fatty acyl donor, but not acyl-CoA or acyl-ACP. This Anaplasma marginale (strain Florida) protein is Glycerol-3-phosphate acyltransferase.